The chain runs to 349 residues: Transmembrane protein 255A (349 aa).

4 consecutive transmembrane segments (helical) span residues Ile-30 to Ala-50, Val-57 to Ile-77, Leu-89 to Val-109, and Thr-226 to Phe-246. The disordered stretch occupies residues Pro-303–Ala-329. The segment covering Ser-316–Ala-329 has biased composition (low complexity).

It belongs to the TMEM255 family.

The protein resides in the membrane. This Homo sapiens (Human) protein is Transmembrane protein 255A (TMEM255A).